The sequence spans 299 residues: Ent-kaurene oxidase-like protein 1 (299 aa).

A helical transmembrane segment spans residues 16–36 (AVVGVFVAAAVVGGFVAAVAL).

Belongs to the cytochrome P450 family. As to expression, expressed in roots and panicles.

Its subcellular location is the membrane. This chain is Ent-kaurene oxidase-like protein 1, found in Oryza sativa subsp. japonica (Rice).